The chain runs to 140 residues: ATP synthase epsilon chain (140 aa).

The protein belongs to the ATPase epsilon chain family. As to quaternary structure, F-type ATPases have 2 components, CF(1) - the catalytic core - and CF(0) - the membrane proton channel. CF(1) has five subunits: alpha(3), beta(3), gamma(1), delta(1), epsilon(1). CF(0) has three main subunits: a, b and c.

It is found in the cell inner membrane. In terms of biological role, produces ATP from ADP in the presence of a proton gradient across the membrane. This chain is ATP synthase epsilon chain, found in Yersinia enterocolitica serotype O:8 / biotype 1B (strain NCTC 13174 / 8081).